A 226-amino-acid polypeptide reads, in one-letter code: Putative N-acetylmannosamine-6-phosphate 2-epimerase 1 (226 aa).

It belongs to the NanE family.

It catalyses the reaction an N-acyl-D-glucosamine 6-phosphate = an N-acyl-D-mannosamine 6-phosphate. Its pathway is amino-sugar metabolism; N-acetylneuraminate degradation; D-fructose 6-phosphate from N-acetylneuraminate: step 3/5. Functionally, converts N-acetylmannosamine-6-phosphate (ManNAc-6-P) to N-acetylglucosamine-6-phosphate (GlcNAc-6-P). This is Putative N-acetylmannosamine-6-phosphate 2-epimerase 1 (nanE1) from Salmonella typhimurium (strain LT2 / SGSC1412 / ATCC 700720).